The sequence spans 169 residues: MTAQANNTIYGFSANALDGSPVALRDFEGKVLLIVNTASQCGFTPQYQGLQALYNRFGDRGFTVLGFPCNQFGQQEPGGSGEIKNFCETRYGVTFPLFEKVEVNGPNAHPLFKFLTAASPGMAIPFLGGAEDIKWNFTKFLVDRQGKVVKRYGSIAKPDEIAADIEKLL.

Cysteine 41 is an active-site residue.

This sequence belongs to the glutathione peroxidase family. In terms of assembly, monomer.

It catalyses the reaction a hydroperoxy polyunsaturated fatty acid + NADPH + H(+) = a hydroxy polyunsaturated fatty acid + NADP(+) + H2O. Mercaptosuccinate, pCMB, and nethylmaleimide act as inhibitors of the catalytic activity. Hydroperoxy fatty acid reductase essential for the removal of lipid hydroperoxides under normal and stress conditions, leading to the protection of membrane integrity. This chain is Hydroperoxy fatty acid reductase gpx1 (gpx1), found in Synechocystis sp. (strain ATCC 27184 / PCC 6803 / Kazusa).